The chain runs to 100 residues: Flagellar transcriptional regulator FlhD (100 aa).

It belongs to the FlhD family. Homodimer; disulfide-linked. Forms a heterohexamer composed of two FlhC and four FlhD subunits. Each FlhC binds a FlhD dimer, forming a heterotrimer, and a hexamer assembles by dimerization of two heterotrimers.

The protein localises to the cytoplasm. In terms of biological role, functions in complex with FlhC as a master transcriptional regulator that regulates transcription of several flagellar and non-flagellar operons by binding to their promoter region. Activates expression of class 2 flagellar genes, including fliA, which is a flagellum-specific sigma factor that turns on the class 3 genes. Also regulates genes whose products function in a variety of physiological pathways. The sequence is that of Flagellar transcriptional regulator FlhD from Ralstonia pickettii (strain 12D).